The following is a 495-amino-acid chain: Glutamyl-tRNA(Gln) amidotransferase subunit A (495 aa).

Catalysis depends on charge relay system residues Lys78 and Ser158. The Acyl-ester intermediate role is filled by Ser182.

This sequence belongs to the amidase family. GatA subfamily. Heterotrimer of A, B and C subunits.

The catalysed reaction is L-glutamyl-tRNA(Gln) + L-glutamine + ATP + H2O = L-glutaminyl-tRNA(Gln) + L-glutamate + ADP + phosphate + H(+). Functionally, allows the formation of correctly charged Gln-tRNA(Gln) through the transamidation of misacylated Glu-tRNA(Gln) in organisms which lack glutaminyl-tRNA synthetase. The reaction takes place in the presence of glutamine and ATP through an activated gamma-phospho-Glu-tRNA(Gln). This chain is Glutamyl-tRNA(Gln) amidotransferase subunit A, found in Roseobacter denitrificans (strain ATCC 33942 / OCh 114) (Erythrobacter sp. (strain OCh 114)).